Reading from the N-terminus, the 539-residue chain is Probable protein kinase UbiB (539 aa).

The Protein kinase domain occupies 125–493 (RFDVEPLASA…RRRQGDRWAL (369 aa)). Residues 131-139 (LASASVAQV) and lysine 153 each bind ATP. The active-site Proton acceptor is the aspartate 288. A run of 2 helical transmembrane segments spans residues 495–515 (LLGAGLLGGGAVLAASAAEAA) and 517–537 (LAAPAAWPAWLMLAAGLYLIV).

The protein belongs to the ABC1 family. UbiB subfamily.

The protein resides in the cell inner membrane. It participates in cofactor biosynthesis; ubiquinone biosynthesis [regulation]. Its function is as follows. Is probably a protein kinase regulator of UbiI activity which is involved in aerobic coenzyme Q (ubiquinone) biosynthesis. The protein is Probable protein kinase UbiB of Pseudomonas putida (strain W619).